The sequence spans 170 residues: Transcription factor E (170 aa).

Residues 1 to 93 (MKDAYLYVVE…AWYVDDEIIR (93 aa)) form the HTH TFE/IIEalpha-type domain.

This sequence belongs to the TFE family. Monomer. Interaction with RNA polymerase subunits RpoF and RpoE is necessary for Tfe stimulatory transcription activity. Able to interact with Tbp and RNA polymerase in the absence of DNA promoter. Interacts both with the preinitiation and elongation complexes.

Functionally, transcription factor that plays a role in the activation of archaeal genes transcribed by RNA polymerase. Facilitates transcription initiation by enhancing TATA-box recognition by TATA-box-binding protein (Tbp), and transcription factor B (Tfb) and RNA polymerase recruitment. Not absolutely required for transcription in vitro, but particularly important in cases where Tbp or Tfb function is not optimal. It dynamically alters the nucleic acid-binding properties of RNA polymerases by stabilizing the initiation complex and destabilizing elongation complexes. Seems to translocate with the RNA polymerase following initiation and acts by binding to the non template strand of the transcription bubble in elongation complexes. The chain is Transcription factor E from Pyrobaculum arsenaticum (strain DSM 13514 / JCM 11321 / PZ6).